The following is a 284-amino-acid chain: Diaminopimelate epimerase (284 aa).

Substrate-binding residues include Asn20, Gln53, and Asn73. Cys82 acts as the Proton donor in catalysis. Substrate is bound by residues 83–84 (GN), Asn167, Asn200, and 218–219 (ER). Cys227 (proton acceptor) is an active-site residue. A substrate-binding site is contributed by 228–229 (GS).

It belongs to the diaminopimelate epimerase family. In terms of assembly, homodimer.

It localises to the cytoplasm. The enzyme catalyses (2S,6S)-2,6-diaminopimelate = meso-2,6-diaminopimelate. It functions in the pathway amino-acid biosynthesis; L-lysine biosynthesis via DAP pathway; DL-2,6-diaminopimelate from LL-2,6-diaminopimelate: step 1/1. Functionally, catalyzes the stereoinversion of LL-2,6-diaminopimelate (L,L-DAP) to meso-diaminopimelate (meso-DAP), a precursor of L-lysine and an essential component of the bacterial peptidoglycan. The polypeptide is Diaminopimelate epimerase (Xanthomonas oryzae pv. oryzae (strain MAFF 311018)).